A 418-amino-acid chain; its full sequence is Beta-arrestin-1 (418 aa).

An interaction with SRC region spans residues 1–163 (MGDKGTRVFK…LEEKIHKRNS (163 aa)). The segment at 45–86 (PEYLKERRVYVTLTCAFRYGREDLDVLGLTFRKDLFVANVQS) is interaction with CHRM2. Tyrosine 47 bears the Phosphotyrosine mark. 1D-myo-inositol hexakisphosphate contacts are provided by lysine 250, methionine 255, lysine 324, and lysine 326. An interaction with TRAF6 region spans residues 318–418 (IVSYKVKVKL…GTGSPRLNDR (101 aa)). The segment at 353–375 (HPKPKEEPPHREVPEHETPVDTN) is disordered. Positions 355–371 (KPKEEPPHREVPEHETP) are enriched in basic and acidic residues. Residues 385–395 (DIVFEDFARQR) carry the [DE]-X(1,2)-F-X-X-[FL]-X-X-X-R motif motif. The disordered stretch occupies residues 397–418 (KGMKDDKEEEEDGTGSPRLNDR). Phosphoserine; by GRK5 is present on serine 412.

It belongs to the arrestin family. As to quaternary structure, monomer. Homodimer. Homooligomer; the self-association is mediated by InsP6-binding. Heterooligomer with ARRB2; the association is mediated by InsP6-binding. Interacts with ADRB2 (phosphorylated). Interacts with CHRM2 (phosphorylated). Interacts with LHCGR. Interacts with CYTH2 and CASR. Interacts with AP2B1 (dephosphorylated at 'Tyr-737'); phosphorylation of AP2B1 at 'Tyr-737' disrupts the interaction. Interacts (dephosphorylated at Ser-412) with CLTC. Interacts with CCR2 and GRK2. Interacts with CRR5. Interacts with PTAFR (phosphorylated on serine residues). Interacts with CLTC and MAP2K3. Interacts with CREB1. Interacts with TRAF6. Interacts with IGF1R and MDM2. Interacts with C5AR1. Interacts with PDE4D. Interacts with SRC (via the SH3 domain and the protein kinase domain); the interaction is independent of the phosphorylation state of SRC C-terminus. Interacts with TACR1. Interacts with RAF1. Interacts with CHUK, IKBKB and MAP3K14. Interacts with DVL1; the interaction is enhanced by phosphorylation of DVL1. Interacts with DVL2; the interaction is enhanced by phosphorylation of DVL2. Interacts with IGF1R. Associates with MAP kinase p38. Part of a MAPK signaling complex consisting of TACR1, ARRB1, SRC, MAPK1 (activated) and MAPK3 (activated). Part of a MAPK signaling complex consisting of F2RL1, ARRB1, RAF1, MAPK1 (activated) and MAPK3 (activated). Interacts with GPR143. Interacts with MAP2K4/MKK4. Interacts with HCK and CXCR1 (phosphorylated). Interacts with ACKR3 and ACKR4. Interacts with ARRDC1; the interaction is direct. Interacts with GPR61, GPR62 and GPR135. Post-translationally, constitutively phosphorylated at Ser-412 in the cytoplasm. At the plasma membrane, is rapidly dephosphorylated, a process that is required for clathrin binding and ADRB2 endocytosis but not for ADRB2 binding and desensitization. Once internalized, is rephosphorylated. In terms of processing, the ubiquitination status appears to regulate the formation and trafficking of beta-arrestin-GPCR complexes and signaling. Ubiquitination appears to occur GPCR-specific. Ubiquitinated by MDM2; the ubiquitination is required for rapid internalization of ADRB2. Deubiquitinated by USP33; the deubiquitination leads to a dissociation of the beta-arrestin-GPCR complex. Stimulation of a class A GPCR, such as ADRB2, induces transient ubiquitination and subsequently promotes association with USP33. Beta-arrestin 1A is found in cortex, cerebellum, striatum, pineal gland, retina and heart. Beta-arrestin 1B is found in spleen, lung, pituitary and kidney.

The protein localises to the cytoplasm. It is found in the nucleus. Its subcellular location is the cell membrane. It localises to the membrane. The protein resides in the clathrin-coated pit. The protein localises to the cell projection. It is found in the pseudopodium. Its subcellular location is the cytoplasmic vesicle. In terms of biological role, functions in regulating agonist-mediated G-protein coupled receptor (GPCR) signaling by mediating both receptor desensitization and resensitization processes. During homologous desensitization, beta-arrestins bind to the GPRK-phosphorylated receptor and sterically preclude its coupling to the cognate G-protein; the binding appears to require additional receptor determinants exposed only in the active receptor conformation. The beta-arrestins target many receptors for internalization by acting as endocytic adapters (CLASPs, clathrin-associated sorting proteins) and recruiting the GPRCs to the adapter protein 2 complex 2 (AP-2) in clathrin-coated pits (CCPs). However, the extent of beta-arrestin involvement appears to vary significantly depending on the receptor, agonist and cell type. Internalized arrestin-receptor complexes traffic to intracellular endosomes, where they remain uncoupled from G-proteins. Two different modes of arrestin-mediated internalization occur. Class A receptors, like ADRB2, OPRM1, ENDRA, D1AR and ADRA1B dissociate from beta-arrestin at or near the plasma membrane and undergo rapid recycling. Class B receptors, like AVPR2, AGTR1, NTSR1, TRHR and TACR1 internalize as a complex with arrestin and traffic with it to endosomal vesicles, presumably as desensitized receptors, for extended periods of time. Receptor resensitization then requires that receptor-bound arrestin is removed so that the receptor can be dephosphorylated and returned to the plasma membrane. Involved in internalization of P2RY4 and UTP-stimulated internalization of P2RY2. Involved in phosphorylation-dependent internalization of OPRD1 ands subsequent recycling. Involved in the degradation of cAMP by recruiting cAMP phosphodiesterases to ligand-activated receptors. Beta-arrestins function as multivalent adapter proteins that can switch the GPCR from a G-protein signaling mode that transmits short-lived signals from the plasma membrane via small molecule second messengers and ion channels to a beta-arrestin signaling mode that transmits a distinct set of signals that are initiated as the receptor internalizes and transits the intracellular compartment. Acts as a signaling scaffold for MAPK pathways such as MAPK1/3 (ERK1/2). ERK1/2 activated by the beta-arrestin scaffold is largely excluded from the nucleus and confined to cytoplasmic locations such as endocytic vesicles, also called beta-arrestin signalosomes. Recruits c-Src/SRC to ADRB2 resulting in ERK activation. GPCRs for which the beta-arrestin-mediated signaling relies on both ARRB1 and ARRB2 (codependent regulation) include ADRB2, F2RL1 and PTH1R. For some GPCRs the beta-arrestin-mediated signaling relies on either ARRB1 or ARRB2 and is inhibited by the other respective beta-arrestin form (reciprocal regulation). Inhibits ERK1/2 signaling in AGTR1- and AVPR2-mediated activation (reciprocal regulation). Is required for SP-stimulated endocytosis of NK1R and recruits c-Src/SRC to internalized NK1R resulting in ERK1/2 activation, which is required for the antiapoptotic effects of SP. Is involved in proteinase-activated F2RL1-mediated ERK activity. Acts as a signaling scaffold for the AKT1 pathway. Is involved in alpha-thrombin-stimulated AKT1 signaling. Is involved in IGF1-stimulated AKT1 signaling leading to increased protection from apoptosis. Involved in activation of the p38 MAPK signaling pathway and in actin bundle formation. Involved in F2RL1-mediated cytoskeletal rearrangement and chemotaxis. Involved in AGTR1-mediated stress fiber formation by acting together with GNAQ to activate RHOA. Appears to function as signaling scaffold involved in regulation of MIP-1-beta-stimulated CCR5-dependent chemotaxis. Involved in attenuation of NF-kappa-B-dependent transcription in response to GPCR or cytokine stimulation by interacting with and stabilizing CHUK. May serve as nuclear messenger for GPCRs. Involved in OPRD1-stimulated transcriptional regulation by translocating to CDKN1B and FOS promoter regions and recruiting EP300 resulting in acetylation of histone H4. Involved in regulation of LEF1 transcriptional activity via interaction with DVL1 and/or DVL2 Also involved in regulation of receptors other than GPCRs. Involved in Toll-like receptor and IL-1 receptor signaling through the interaction with TRAF6 which prevents TRAF6 autoubiquitination and oligomerization required for activation of NF-kappa-B and JUN. Involved in IL8-mediated granule release in neutrophils. Binds phosphoinositides. Binds inositol hexakisphosphate (InsP6). Required for atypical chemokine receptor ACKR2-induced RAC1-LIMK1-PAK1-dependent phosphorylation of cofilin (CFL1) and for the up-regulation of ACKR2 from endosomal compartment to cell membrane, increasing its efficiency in chemokine uptake and degradation. Involved in the internalization of the atypical chemokine receptor ACKR3. Negatively regulates the NOTCH signaling pathway by mediating the ubiquitination and degradation of NOTCH1 by ITCH. Participates in the recruitment of the ubiquitin-protein ligase to the receptor. This is Beta-arrestin-1 (ARRB1) from Bos taurus (Bovine).